Here is a 367-residue protein sequence, read N- to C-terminus: Mitogen-activated protein kinase 12 (367 aa).

One can recognise a Protein kinase domain in the interval 27-311 (YQDLQPVGSG…AAEALAHPYF (285 aa)). ATP-binding positions include 33-41 (VGSGAYGAV) and K56. The active-site Proton acceptor is D153. T183 carries the phosphothreonine; by MAP2K3 and MAP2K6 modification. Residues 183–185 (TGY) carry the TXY motif. Phosphotyrosine; by MAP2K3 and MAP2K6 is present on Y185.

The protein belongs to the protein kinase superfamily. CMGC Ser/Thr protein kinase family. MAP kinase subfamily. Monomer. Interacts with the PDZ domain of the syntrophin SNTA1. Interacts with LIN7C, SCRIB, SYNJ2BP and SH3BP5. Interacts with PTPN4; this interaction induces the activation of PTPN4 phosphatase activity. It depends on Mg(2+) as a cofactor. In terms of processing, dually phosphorylated on Thr-183 and Tyr-185 by MAP2K3/MKK3 and MAP2K6/MKK6, which activates the enzyme. Post-translationally, ubiquitinated. Ubiquitination leads to degradation by the proteasome pathway. Highly expressed in skeletal muscle, lung and testes and also in the heart and thymus of both adult and neonatal rats.

The protein localises to the cytoplasm. It localises to the nucleus. It is found in the mitochondrion. It catalyses the reaction L-seryl-[protein] + ATP = O-phospho-L-seryl-[protein] + ADP + H(+). The enzyme catalyses L-threonyl-[protein] + ATP = O-phospho-L-threonyl-[protein] + ADP + H(+). Its activity is regulated as follows. Activated by phosphorylation on threonine and tyrosine. MAP2K3/MKK3 and MAP2K6/MKK6 are both essential for the activation of MAPK12 induced by environmental stress, whereas MAP2K6/MKK6 is the major MAPK12 activator in response to TNF-alpha. In terms of biological role, serine/threonine kinase which acts as an essential component of the MAP kinase signal transduction pathway. MAPK12 is one of the four p38 MAPKs which play an important role in the cascades of cellular responses evoked by extracellular stimuli such as pro-inflammatory cytokines or physical stress leading to direct activation of transcription factors such as ELK1 and ATF2. Accordingly, p38 MAPKs phosphorylate a broad range of proteins and it has been estimated that they may have approximately 200 to 300 substrates each. Some of the targets are downstream kinases such as MAPKAPK2, which are activated through phosphorylation and further phosphorylate additional targets. Plays a role in myoblast differentiation and also in the down-regulation of cyclin D1 in response to hypoxia in adrenal cells suggesting MAPK12 may inhibit cell proliferation while promoting differentiation. Phosphorylates DLG1. Following osmotic shock, MAPK12 in the cell nucleus increases its association with nuclear DLG1, thereby causing dissociation of DLG1-SFPQ complexes. This function is independent of its catalytic activity and could affect mRNA processing and/or gene transcription to aid cell adaptation to osmolarity changes in the environment. Regulates UV-induced checkpoint signaling and repair of UV-induced DNA damage and G2 arrest after gamma-radiation exposure. MAPK12 is involved in the regulation of SLC2A1 expression and basal glucose uptake in L6 myotubes; and negatively regulates SLC2A4 expression and contraction-mediated glucose uptake in adult skeletal muscle. C-Jun (JUN) phosphorylation is stimulated by MAPK14 and inhibited by MAPK12, leading to a distinct AP-1 regulation. MAPK12 is required for the normal kinetochore localization of PLK1, prevents chromosomal instability and supports mitotic cell viability. MAPK12-signaling is also positively regulating the expansion of transient amplifying myogenic precursor cells during muscle growth and regeneration. This chain is Mitogen-activated protein kinase 12 (Mapk12), found in Rattus norvegicus (Rat).